We begin with the raw amino-acid sequence, 276 residues long: Dermonecrotic toxin LarSicTox-alphaIB2c (276 aa).

Residue His5 is part of the active site. Mg(2+)-binding residues include Glu25 and Asp27. Catalysis depends on His41, which acts as the Nucleophile. Disulfide bonds link Cys45-Cys51 and Cys47-Cys190. Asp85 contributes to the Mg(2+) binding site. The N-linked (GlcNAc...) asparagine glycan is linked to Asn253.

This sequence belongs to the arthropod phospholipase D family. Class II subfamily. Mg(2+) is required as a cofactor. In terms of tissue distribution, expressed by the venom gland.

It is found in the secreted. The catalysed reaction is an N-(acyl)-sphingosylphosphocholine = an N-(acyl)-sphingosyl-1,3-cyclic phosphate + choline. The enzyme catalyses an N-(acyl)-sphingosylphosphoethanolamine = an N-(acyl)-sphingosyl-1,3-cyclic phosphate + ethanolamine. It carries out the reaction a 1-acyl-sn-glycero-3-phosphocholine = a 1-acyl-sn-glycero-2,3-cyclic phosphate + choline. It catalyses the reaction a 1-acyl-sn-glycero-3-phosphoethanolamine = a 1-acyl-sn-glycero-2,3-cyclic phosphate + ethanolamine. Functionally, dermonecrotic toxins cleave the phosphodiester linkage between the phosphate and headgroup of certain phospholipids (sphingolipid and lysolipid substrates), forming an alcohol (often choline) and a cyclic phosphate. This toxin acts on sphingomyelin (SM). It may also act on ceramide phosphoethanolamine (CPE), lysophosphatidylcholine (LPC) and lysophosphatidylethanolamine (LPE), but not on lysophosphatidylserine (LPS), and lysophosphatidylglycerol (LPG). It acts by transphosphatidylation, releasing exclusively cyclic phosphate products as second products. Induces dermonecrosis, hemolysis, increased vascular permeability, edema, inflammatory response, and platelet aggregation. The protein is Dermonecrotic toxin LarSicTox-alphaIB2c of Loxosceles arizonica (Arizona brown spider).